A 732-amino-acid chain; its full sequence is uncharacterized protein (732 aa).

This sequence belongs to the mimivirus L137 family.

This is an uncharacterized protein from Acanthamoeba polyphaga mimivirus (APMV).